The sequence spans 249 residues: Uridylate kinase (249 aa).

ATP is bound at residue 23 to 26; the sequence is KISG. Residues 31–36 are involved in allosteric activation by GTP; sequence GDQGFG. Gly65 contributes to the UMP binding site. Positions 66 and 70 each coordinate ATP. Residues Asp85 and 146–153 each bind UMP; that span reads TGNPYFTT. ATP is bound by residues Thr173, Tyr179, and Asp182.

This sequence belongs to the UMP kinase family. Homohexamer.

It is found in the cytoplasm. The catalysed reaction is UMP + ATP = UDP + ADP. It functions in the pathway pyrimidine metabolism; CTP biosynthesis via de novo pathway; UDP from UMP (UMPK route): step 1/1. Its activity is regulated as follows. Allosterically activated by GTP. Inhibited by UTP. Catalyzes the reversible phosphorylation of UMP to UDP. The chain is Uridylate kinase from Jannaschia sp. (strain CCS1).